A 571-amino-acid chain; its full sequence is MTYLLNSPDDFADEAVRGLVAANPDLLTEVPGGVVRSTETPKGQPALVIGGGSGHYPAFAGWVGPGMGHGAPCGNIFSSPSASEVYSVVRNAENGGGVILGFGNYAGDVLHFGLAAEKLRHEGIDVRIVTVSDDIASNSPENHRDRRGVAGDLPVFKIAGAAIEAGADLDEAERVAWKANDATRSFGLAFEGCTLPGATEPLFHVEKGWMGVGLGIHGEPGVRDNRLGTAAEVADMLFDEVTAEEPPRGENGYDGRVAVILNGLGTVKYEELFVVYGRIAERLAQQGFTVVRPEVGEFVTSLDMAGVSLTMVFLDDELERLWTAPVETPAYRRGAMPAVDRTPRTTTWDAAETTIPEASEGSRECARNIVAVLETFQQVCADNEAELGRIDAVAGDGDHGQGMSFGSRGAAQAARDAVDRNAGARTTLLLAGQAWADAAGGTSGALWGAALTSAGGVFSDTDGADEQAAVDAICAGIDAILRLGGAQPGDKTMVDAAVPFRDALVKAFDTQAGPAITSAARVAREAAEKTADITARRGRARVLGEKSVGTPDPGALSFAMLMKALGEHLTR.

The DhaK domain occupies 7-331 (SPDDFADEAV…WTAPVETPAY (325 aa)). The Tele-hemiaminal-histidine intermediate role is filled by His-217. The DhaL domain maps to 367-567 (RNIVAVLETF…FAMLMKALGE (201 aa)). Residues 396–402 (DGDHGQG), 442–443 (TS), Gly-484, Arg-539, and 552–554 (DPG) contribute to the ATP site.

It carries out the reaction L-erythrulose + ATP = L-erythrulose 1-phosphate + ADP + H(+). It functions in the pathway carbohydrate metabolism; L-threitol degradation. In terms of biological role, kinase that has a preference for L-erythrulose, producing L-erythrulose-1P. Involved in the degradation pathway of L-threitol, that allows M.smegmatis to grow on this compound as the sole carbon source. Is also able to phosphorylate D-erythrulose and dihydroxyacetone in vitro. This chain is L-erythrulose 1-kinase, found in Mycolicibacterium smegmatis (strain ATCC 700084 / mc(2)155) (Mycobacterium smegmatis).